Consider the following 388-residue polypeptide: Succinate--CoA ligase [ADP-forming] subunit beta (388 aa).

One can recognise an ATP-grasp domain in the interval 9–244 (KEILRKYNVP…LDEEDANEIE (236 aa)). Residues K46, 53 to 55 (GRG), E99, A102, and E107 each bind ATP. Mg(2+)-binding residues include N199 and D213. Residues N264 and 321-323 (GIM) contribute to the substrate site.

The protein belongs to the succinate/malate CoA ligase beta subunit family. As to quaternary structure, heterotetramer of two alpha and two beta subunits. Requires Mg(2+) as cofactor.

It carries out the reaction succinate + ATP + CoA = succinyl-CoA + ADP + phosphate. The catalysed reaction is GTP + succinate + CoA = succinyl-CoA + GDP + phosphate. It functions in the pathway carbohydrate metabolism; tricarboxylic acid cycle; succinate from succinyl-CoA (ligase route): step 1/1. Succinyl-CoA synthetase functions in the citric acid cycle (TCA), coupling the hydrolysis of succinyl-CoA to the synthesis of either ATP or GTP and thus represents the only step of substrate-level phosphorylation in the TCA. The beta subunit provides nucleotide specificity of the enzyme and binds the substrate succinate, while the binding sites for coenzyme A and phosphate are found in the alpha subunit. In Cupriavidus taiwanensis (strain DSM 17343 / BCRC 17206 / CCUG 44338 / CIP 107171 / LMG 19424 / R1) (Ralstonia taiwanensis (strain LMG 19424)), this protein is Succinate--CoA ligase [ADP-forming] subunit beta.